Consider the following 790-residue polypeptide: PGC-1 and ERR-induced regulator in muscle protein 1 (790 aa).

Disordered stretches follow at residues 38–391 (LLSS…TPIS), 425–449 (VASS…STPV), 507–545 (SVAG…EAVA), and 626–648 (QRSR…APIP). Positions 40–52 (SSDIDQGDSSGSS) are enriched in low complexity. 2 stretches are compositionally biased toward polar residues: residues 80 to 89 (ATQQPVSRSQ) and 98 to 107 (TGQQTPSTSA). Over residues 111–123 (APPSLGPGASPPS) the composition is skewed to low complexity. The segment covering 146–157 (APRPPGEPPGSP) has biased composition (pro residues). Residues 158-169 (KSPGHSTGSQRP) show a composition bias toward low complexity. The segment covering 170–179 (PDSPGAPPRS) has biased composition (pro residues). The span at 366 to 391 (KPQSDTAVSTPASEPQSSVALSTPIS) shows a compositional bias: polar residues. Residues 515–532 (KPGSGQASARPSAPQTAT) are compositionally biased toward polar residues. Pro residues predominate over residues 635-648 (EPLPRADPVPAPIP).

As to expression, muscle-specific expression is increased by endurance exercise.

It localises to the cytoplasm. The protein localises to the nucleus. Functionally, regulates the expression of selective PPARGC1A/B and ESRRA/B/G target genes with roles in glucose and lipid metabolism, energy transfer, contractile function, muscle mitochondrial biogenesis and oxidative capacity. Required for the efficient induction of MT-CO2, MT-CO3, COX4I1, TFB1M, TFB2M, POLRMT and SIRT3 by PPARGC1A. Positively regulates the PPARGC1A/ESRRG-induced expression of CKMT2, TNNI3 and SLC2A4 and negatively regulates the PPARGC1A/ESRRG-induced expression of PDK4. In Homo sapiens (Human), this protein is PGC-1 and ERR-induced regulator in muscle protein 1 (PERM1).